The primary structure comprises 492 residues: Myocyte-specific enhancer factor 2A (492 aa).

The 55-residue stretch at 3 to 57 (RKKIQITRIMDERNRQVTFTKRKFGLMKKAYELSVLCDCEIALIIFNSSNKLFQY) folds into the MADS-box domain. The segment at residues 58-86 (ASTDMDKVLLKYTEYNEPHESRTNSDIVE) is a DNA-binding region (mef2-type). Ser59 is modified (phosphoserine; by CK2). Ser98 is subject to Phosphoserine. Residues 183 to 227 (PQATLHRNVSPGAPQRPPSTGSAGGMLSTSDLTVPNGAGSSPVGN) are disordered. Residues 209–227 (LSTSDLTVPNGAGSSPVGN) show a composition bias toward polar residues. Phosphoserine is present on Ser235. Residues 242–270 (TGANSLGKVMPTKSPPPPGGGSLGMNSRK) form a disordered region. At Lys249 the chain carries N6-acetyllysine. Residue Ser255 is modified to Phosphoserine. The tract at residues 266–283 (MNSRKPDLRVVIPPSSKG) is required for interaction with MAPKs. 2 positions are modified to phosphothreonine; by MAPK7 and MAPK14: Thr304 and Thr311. At Ser347 the chain carries Phosphoserine; by MAPK7. The segment covering 382-394 (SNLSINTNQNINI) has biased composition (polar residues). Residues 382–492 (SNLSINTNQN…KRMRMDAWVT (111 aa)) form a disordered region. At Lys395 the chain carries N6-acetyllysine; alternate. Lys395 is covalently cross-linked (Glycyl lysine isopeptide (Lys-Gly) (interchain with G-Cter in SUMO); alternate). Phosphoserine; by CDK5 is present on Ser400. Thr407 carries the post-translational modification Phosphothreonine. Over residues 417–430 (PQPPPPPPQAPQPQ) the composition is skewed to pro residues. At Ser438 the chain carries Phosphoserine; by MAPK. Low complexity predominate over residues 438–451 (SPVDSLSSSSSSYD). 2 stretches are compositionally biased toward basic and acidic residues: residues 452–462 (GSDREDPRGDF) and 473–492 (NSEDRESPSVKRMRMDAWVT).

As to quaternary structure, binds DNA as a homo- or heterodimer. Dimerizes with MEF2D. Interacts with HDAC7. Interacts with PIAS1; the interaction enhances sumoylation. Interacts with HDAC4, HDAC9 and SLC2A4RG. Interacts (via the N-terminal) with MAPK7; the interaction results in the phosphorylation and transcriptional activity of MEF2A. Constitutive phosphorylation on Ser-400 promotes Lys-395 sumoylation thus preventing acetylation at this site. Dephosphorylation on Ser-400 by PPP3CA upon neuron depolarization promotes a switch from sumoylation to acetylation on residue Lys-395 leading to inhibition of dendrite claw differentiation. Phosphorylation on Thr-304 and Thr-311 are the main sites involved in p38 MAPK signaling and activate transcription. Phosphorylated on these sites by MAPK14/p38alpha and MAPK11/p38beta, but not by MAPK13/p38delta nor by MAPK12/p38gamma. Phosphorylation on Ser-400 by CDK5 induced by neurotoxicity inhibits MEF2A transcriptional activation leading to apoptosis of cortical neurons. Phosphorylation on Thr-304, Thr-311 and Ser-347 can be induced by EGF. In terms of processing, sumoylation on Lys-395 is enhanced by PIAS1 and represses transcriptional activity. Phosphorylation on Ser-400 is required for sumoylation. Has no effect on nuclear location nor on DNA binding. Sumoylated with SUMO1 and, to a lesser extent with SUMO2 and SUMO3. PIASx facilitates sumoylation in postsynaptic dendrites in the cerebellar cortex and promotes their morphogenesis. Post-translationally, acetylation on Lys-395 activates transcriptional activity. Acetylated by p300 on several sites in diffentiating myocytes. Acetylation on Lys-4 increases DNA binding and transactivation. Hyperacetylation by p300 leads to enhanced cardiac myocyte growth and heart failure. Proteolytically cleaved in cerebellar granule neurons on several sites by caspase 3 and caspase 7 following neurotoxicity. Preferentially cleaves the CDK5-mediated hyperphosphorylated form which leads to neuron apoptosis and transcriptional inactivation.

Its subcellular location is the nucleus. Functionally, transcriptional activator which binds specifically to the MEF2 element, 5'-YTA[AT](4)TAR-3', found in numerous muscle-specific genes. Also involved in the activation of numerous growth factor- and stress-induced genes. Mediates cellular functions not only in skeletal and cardiac muscle development, but also in neuronal differentiation and survival. Plays diverse roles in the control of cell growth, survival and apoptosis via p38 MAPK signaling in muscle-specific and/or growth factor-related transcription. In cerebellar granule neurons, phosphorylated and sumoylated MEF2A represses transcription of NUR77 promoting synaptic differentiation. Associates with chromatin to the ZNF16 promoter. In Bos taurus (Bovine), this protein is Myocyte-specific enhancer factor 2A (MEF2A).